Consider the following 1423-residue polypeptide: DNA-directed RNA polymerase subunit beta' (1423 aa).

Residues C71, C73, C86, and C89 each contribute to the Zn(2+) site. D461, D463, and D465 together coordinate Mg(2+). Residues C815, C889, C896, and C899 each contribute to the Zn(2+) site.

Belongs to the RNA polymerase beta' chain family. The RNAP catalytic core consists of 2 alpha, 1 beta, 1 beta' and 1 omega subunit. When a sigma factor is associated with the core the holoenzyme is formed, which can initiate transcription. Mg(2+) is required as a cofactor. It depends on Zn(2+) as a cofactor.

It carries out the reaction RNA(n) + a ribonucleoside 5'-triphosphate = RNA(n+1) + diphosphate. DNA-dependent RNA polymerase catalyzes the transcription of DNA into RNA using the four ribonucleoside triphosphates as substrates. In Actinobacillus pleuropneumoniae serotype 3 (strain JL03), this protein is DNA-directed RNA polymerase subunit beta'.